Consider the following 890-residue polypeptide: UPF0182 protein SYNW1212 (890 aa).

8 consecutive transmembrane segments (helical) span residues 21–41, 64–84, 98–118, 134–154, 173–193, 219–239, 268–288, and 295–315; these read WLLQ…AIRW, LTLL…NGLI, WQVS…LVAV, AVVL…SIPL, FAAL…CLGN, RLLM…CWLS, LLTV…SLLL, and VLAV…WLIL.

This sequence belongs to the UPF0182 family.

It localises to the cell membrane. This chain is UPF0182 protein SYNW1212, found in Parasynechococcus marenigrum (strain WH8102).